The chain runs to 553 residues: Dihydroxy-acid dehydratase (553 aa).

Asp78 lines the Mg(2+) pocket. Cys119 serves as a coordination point for [2Fe-2S] cluster. Residues Asp120 and Lys121 each contribute to the Mg(2+) site. Position 121 is an N6-carboxylysine (Lys121). Cys193 provides a ligand contact to [2Fe-2S] cluster. Glu441 provides a ligand contact to Mg(2+). Ser467 (proton acceptor) is an active-site residue.

The protein belongs to the IlvD/Edd family. Homodimer. It depends on [2Fe-2S] cluster as a cofactor. Requires Mg(2+) as cofactor.

It catalyses the reaction (2R)-2,3-dihydroxy-3-methylbutanoate = 3-methyl-2-oxobutanoate + H2O. The catalysed reaction is (2R,3R)-2,3-dihydroxy-3-methylpentanoate = (S)-3-methyl-2-oxopentanoate + H2O. It functions in the pathway amino-acid biosynthesis; L-isoleucine biosynthesis; L-isoleucine from 2-oxobutanoate: step 3/4. Its pathway is amino-acid biosynthesis; L-valine biosynthesis; L-valine from pyruvate: step 3/4. Its function is as follows. Functions in the biosynthesis of branched-chain amino acids. Catalyzes the dehydration of (2R,3R)-2,3-dihydroxy-3-methylpentanoate (2,3-dihydroxy-3-methylvalerate) into 2-oxo-3-methylpentanoate (2-oxo-3-methylvalerate) and of (2R)-2,3-dihydroxy-3-methylbutanoate (2,3-dihydroxyisovalerate) into 2-oxo-3-methylbutanoate (2-oxoisovalerate), the penultimate precursor to L-isoleucine and L-valine, respectively. This Trichlorobacter lovleyi (strain ATCC BAA-1151 / DSM 17278 / SZ) (Geobacter lovleyi) protein is Dihydroxy-acid dehydratase.